Reading from the N-terminus, the 236-residue chain is 2-C-methyl-D-erythritol 4-phosphate cytidylyltransferase (236 aa).

It belongs to the IspD/TarI cytidylyltransferase family. IspD subfamily. Homodimer.

It catalyses the reaction 2-C-methyl-D-erythritol 4-phosphate + CTP + H(+) = 4-CDP-2-C-methyl-D-erythritol + diphosphate. It functions in the pathway isoprenoid biosynthesis; isopentenyl diphosphate biosynthesis via DXP pathway; isopentenyl diphosphate from 1-deoxy-D-xylulose 5-phosphate: step 2/6. In terms of biological role, catalyzes the formation of 4-diphosphocytidyl-2-C-methyl-D-erythritol from CTP and 2-C-methyl-D-erythritol 4-phosphate (MEP). This Salmonella heidelberg (strain SL476) protein is 2-C-methyl-D-erythritol 4-phosphate cytidylyltransferase.